A 355-amino-acid polypeptide reads, in one-letter code: C-C chemokine receptor type 1 (355 aa).

Topologically, residues 1 to 34 (MEISDFTEAYPTTTEFDYGDSTPCQKTAVRAFGA) are extracellular. Residues 35 to 60 (GLLPPLYSLVFIIGVVGNVLVILVLM) form a helical membrane-spanning segment. Topologically, residues 61-64 (QHRR) are cytoplasmic. The helical transmembrane segment at 65–91 (LQSMTSIYLFNLAVSDLVFLFTLPFWI) threads the bilayer. Topologically, residues 92–107 (DYKLKDDWIFGDAMCK) are extracellular. The cysteines at positions 106 and 183 are disulfide-linked. Residues 108–129 (LLSGFYYLGLYSEIFFIILLTI) form a helical membrane-spanning segment. Residues 130-146 (DRYLAIVHAVFALRART) are Cytoplasmic-facing. The chain crosses the membrane as a helical span at residues 147–171 (VTFGIITSIITWALAILASMPALYF). Topologically, residues 172–197 (FKAQWEFTHRTCSPHFPYKSLKQWKR) are extracellular. Residues 198 to 223 (FQALKLNLLGLILPLLVMIICYAGII) traverse the membrane as a helical segment. The Cytoplasmic portion of the chain corresponds to 224-239 (RILLRRPSEKKVKAVR). The chain crosses the membrane as a helical span at residues 240–264 (LIFAITLLFFLLWTPYNLSVFVSAF). The Extracellular portion of the chain corresponds to 265–281 (QDVLFTNQCEQSKQLDL). The helical transmembrane segment at 282–305 (AMQVTEVIAYTHCCVNPIIYVFVG) threads the bilayer. At 306-355 (ERFWKYLRQLFQRHVAIPLAKWLPFLSVDQLERTSSISPSTGEHELSAGF) the chain is on the cytoplasmic side.

This sequence belongs to the G-protein coupled receptor 1 family. In terms of assembly, interacts with CREB3. Interacts with CCL3. Interacts with CCL15. Interacts with CCL23. Interacts with GNAI1. Interacts with PF4/CXCL4. In terms of tissue distribution, detected in the heart, spleen, lung, peritoneal exudate cells and leukocytes.

The protein resides in the cell membrane. Its function is as follows. Chemokine receptor that plays a crucial role in regulating immune cell migration, inflammation, and immune responses. Contributes to the inflammatory response by recruiting immune cells, such as monocytes, macrophages, T-cells, and dendritic cells, to sites of inflammation for the clearance of pathogens and the resolution of tissue damage. When activated by its ligands including CCL3, CCL5-9, CCL13-16 and CCL23, triggers a signaling cascade within immune cells, leading to their migration towards the source of the chemokine. For example, mediates neutrophil migration after activation by CCL3 leading to the sequential release of TNF-alpha and leukotriene B4. Also mediates monocyte migration upon CXCL4 binding. Activation by CCL5 results in neuroinflammation through the ERK1/2 signaling pathway. The sequence is that of C-C chemokine receptor type 1 (Ccr1) from Mus musculus (Mouse).